A 326-amino-acid chain; its full sequence is Meso-diaminopimelate D-dehydrogenase (326 aa).

NADP(+) contacts are provided by residues 11–14, 35–37, 69–72, 92–94, and 121–125; these read YGNL, TRR, CGGS, SFD, and VGWDP. Residues D94, D124, W148, 154 to 155, T173, R199, H249, and N276 each bind substrate; that span reads QG.

It belongs to the diaminopimelate dehydrogenase family. Homodimer.

It catalyses the reaction meso-2,6-diaminopimelate + NADP(+) + H2O = (S)-2-amino-6-oxoheptanedioate + NH4(+) + NADPH + H(+). The protein operates within amino-acid biosynthesis; L-lysine biosynthesis via DAP pathway; DL-2,6-diaminopimelate from (S)-tetrahydrodipicolinate: step 1/1. L,L-2,6-diaminopimelate, D,D-2,6-diaminopimelate and meso-2,5-diaminoadipate competitively inhibit the oxidation of meso-2,6-diaminopimelate. L-2-amino-6-methylene-pimelate is also a potent competitive inhibitor (5 uM) of this reaction. Glyoxylate inhibits the reductive amination of L-2-amino-6-oxopimelate about 30%. The enzyme is inhibited completely by p-chloromercuribenzoate and HgCl(2) in vitro. In terms of biological role, catalyzes the reversible NADPH-dependent reductive amination of L-2-amino-6-oxopimelate, the acyclic form of L-tetrahydrodipicolinate, to generate the meso compound, D,L-2,6-diaminopimelate. Probably plays a role in lysine biosynthesis. Exhibits a high substrate specificity, since alpha-ketoglutarate, pyruvate, oxaloacetate, glyoxylate, alpha-ketobutyrate, alpha-ketovalerate, alpha-ketocaproate, alpha-ketoisocaproate, alpha-ketoisovalerate, and phenylpyruvate are not substrates for the reductive amination reaction, and L,L-2,6-diaminopimelate, D,D-2,6-diaminopimelate, DL-alpha-aminopimelate, meso- and DL-2,5-diaminoadipate, L-djenkolate, L-cystine, L-lysine, S-(beta-aminoethy1)-L-homocysteine, L-ornithine, L-arginine, L-alpha,gamma-diaminobutyrate, L-histidine, L-phenylalanine, L-tyrosine, L-glutamate, L-aspartate, L-leucine, L-valine, L-methionine, L-serine, L-alanine, L-alpha-aminobutyrate, D-lysine, D-glutamate, D-leucine, D-alanine, D-phenylalanine, epsilon-aminocaproate, 7-aminoheptanoate, and 8-aminooctanoate are not substrates for the oxidative deamination reaction. Cannot use NAD(+) or NAD(+) analogs instead of NADP(+) for the oxidative deamination reaction. This chain is Meso-diaminopimelate D-dehydrogenase (dapdh), found in Lysinibacillus sphaericus (Bacillus sphaericus).